A 275-amino-acid chain; its full sequence is Glucan endo-1,3-beta-glucosidase, acidic isoform PR-N (275 aa).

Glu-196 serves as the catalytic Nucleophile.

It belongs to the glycosyl hydrolase 17 family. In terms of processing, the N-terminus is blocked.

Its subcellular location is the secreted. The protein resides in the extracellular space. The catalysed reaction is Hydrolysis of (1-&gt;3)-beta-D-glucosidic linkages in (1-&gt;3)-beta-D-glucans.. Implicated in the defense of plants against pathogens. In Nicotiana tabacum (Common tobacco), this protein is Glucan endo-1,3-beta-glucosidase, acidic isoform PR-N (PRN).